A 149-amino-acid chain; its full sequence is Calmodulin (149 aa).

At Ala2 the chain carries N-acetylalanine. EF-hand domains lie at 8–43 (EQIA…LGQN), 44–79 (PTEA…KMKD), 81–116 (DSEE…LGEK), and 117–149 (LTDE…MTNK). Ca(2+) is bound by residues Asp21, Asp23, Asp25, Thr27, Glu32, Asp57, Asp59, Asn61, Thr63, Glu68, Asp94, Asp96, Asn98, and Glu105. An N6,N6,N6-trimethyllysine modification is found at Lys116. Residues Asp130, Asp132, Asp134, Gln136, and Glu141 each coordinate Ca(2+).

The protein belongs to the calmodulin family.

Calmodulin mediates the control of a large number of enzymes, ion channels and other proteins by Ca(2+). Among the enzymes to be stimulated by the calmodulin-Ca(2+) complex are a number of protein kinases and phosphatases. This is Calmodulin from Ciona intestinalis (Transparent sea squirt).